The chain runs to 327 residues: uncharacterized protein (327 aa).

The chain crosses the membrane as a helical span at residues 12-32 (LVVVVVAIAIFTLVLLMLWEG). A disordered region spans residues 149–170 (AFSAVETSEGSDQESEGADEQG). Acidic residues predominate over residues 157–167 (EGSDQESEGAD). A coiled-coil region spans residues 162–227 (ESEGADEQGK…LDEENREVAE (66 aa)).

The protein resides in the membrane. This is an uncharacterized protein from Encephalitozoon cuniculi (strain GB-M1) (Microsporidian parasite).